The primary structure comprises 438 residues: Enolase (438 aa).

Q164 serves as a coordination point for (2R)-2-phosphoglycerate. Residue E206 is the Proton donor of the active site. D243, E289, and D316 together coordinate Mg(2+). (2R)-2-phosphoglycerate is bound by residues K341, R370, S371, and K392. The Proton acceptor role is filled by K341.

Belongs to the enolase family. It depends on Mg(2+) as a cofactor.

The protein resides in the cytoplasm. It is found in the secreted. It localises to the cell surface. The enzyme catalyses (2R)-2-phosphoglycerate = phosphoenolpyruvate + H2O. Its pathway is carbohydrate degradation; glycolysis; pyruvate from D-glyceraldehyde 3-phosphate: step 4/5. Functionally, catalyzes the reversible conversion of 2-phosphoglycerate (2-PG) into phosphoenolpyruvate (PEP). It is essential for the degradation of carbohydrates via glycolysis. This Borrelia garinii subsp. bavariensis (strain ATCC BAA-2496 / DSM 23469 / PBi) (Borreliella bavariensis) protein is Enolase.